A 432-amino-acid chain; its full sequence is Trigger factor (432 aa).

The region spanning 161–246 (GSRATIDFVG…LNKVEARELP (86 aa)) is the PPIase FKBP-type domain.

It belongs to the FKBP-type PPIase family. Tig subfamily.

It is found in the cytoplasm. The enzyme catalyses [protein]-peptidylproline (omega=180) = [protein]-peptidylproline (omega=0). Involved in protein export. Acts as a chaperone by maintaining the newly synthesized protein in an open conformation. Functions as a peptidyl-prolyl cis-trans isomerase. This is Trigger factor from Vibrio atlanticus (strain LGP32) (Vibrio splendidus (strain Mel32)).